Reading from the N-terminus, the 308-residue chain is Isochorismatase domain-containing protein 1 (308 aa).

The protein belongs to the isochorismatase family.

The protein is Isochorismatase domain-containing protein 1 (isoc1) of Xenopus tropicalis (Western clawed frog).